A 965-amino-acid polypeptide reads, in one-letter code: Transmembrane channel-like protein 5 (965 aa).

Polar residues-rich tracts occupy residues 1–10 and 20–31; these read MSSFHKNSSY and SGSQNHTQNYLR. The interval 1–235 is disordered; that stretch reads MSSFHKNSSY…GAEEGDVYSP (235 aa). Residues 1–417 are Extracellular-facing; it reads MSSFHKNSSY…YFSFLRWLLK (417 aa). The span at 61–70 shows a compositional bias: basic and acidic residues; the sequence is TNPDYHHSLA. The span at 166–181 shows a compositional bias: polar residues; that stretch reads QGNSYHSGPRSHSNLP. Ser-248 carries the post-translational modification Phosphoserine. A helical transmembrane segment spans residues 418–438; it reads FNIFSFVMNFSFIIIPQFTVG. At 439-444 the chain is on the cytoplasmic side; that stretch reads EKNTLQ. Residues 445-467 traverse the membrane as a helical segment; the sequence is FTGLEFFTGAGYFRETVMYYGFY. At 468 to 484 the chain is on the extracellular side; sequence TNSTIRHRMGGASYNMQ. A helical transmembrane segment spans residues 485–505; sequence LAYIFTIGACLVICFFSLLFS. At 506–578 the chain is on the cytoplasmic side; the sequence is MAKYFRNNFI…NQKLTRFSVH (73 aa). A helical transmembrane segment spans residues 579 to 599; the sequence is VAAWLVSTGITAACCVAVYYL. Residues 600 to 613 are Extracellular-facing; it reads AEYNSEFLKTHKNP. A helical membrane pass occupies residues 614–634; sequence GAVLLLPFVVSCINLAVPRFY. The Cytoplasmic segment spans residues 635–657; the sequence is SMFRLVERYEIPRQEVYVLLIRN. Residues 658 to 678 form a helical membrane-spanning segment; the sequence is IFLKISIVGILCYYWLNIVAL. Residues 679 to 691 lie on the Extracellular side of the membrane; that stretch reads SGEECWETLIGQD. The helical transmembrane segment at 692–712 threads the bilayer; that stretch reads IYRLLLMDFVFSLADSLLGEF. At 713 to 747 the chain is on the cytoplasmic side; that stretch reads LRRLIGMKFITSLSLQEFDIARNVLELIYAQTLAW. Residues 748-768 traverse the membrane as a helical segment; the sequence is LGIFFCPLLPFIQMITLFIMF. Residues 769-794 are Extracellular-facing; sequence YVKNVSLMMNFQPPSKAWRASQMITF. Residues 795 to 815 traverse the membrane as a helical segment; sequence FIFLLFFPSFTGVLCTLAITI. At 816–859 the chain is on the cytoplasmic side; it reads WRLKPSADCGPFRGLPSFIQSIYSWIDTLSHRPGYLWVVWIYQN. Residues 860–880 form a helical membrane-spanning segment; it reads LIGSVHFFFILTLIVLIITYL. Residues 881 to 965 are Extracellular-facing; sequence YWQITEGRKV…RSMQEENAIA (85 aa).

It belongs to the TMC family.

The protein resides in the membrane. Its function is as follows. Probable component of an ion channel. Molecular function hasn't been characterized yet. The polypeptide is Transmembrane channel-like protein 5 (Rattus norvegicus (Rat)).